Reading from the N-terminus, the 558-residue chain is Dimethylaniline monooxygenase [N-oxide-forming] 4 (558 aa).

Residues glycine 9–serine 13, glutamate 32, and leucine 40–tryptophan 41 contribute to the FAD site. NADP(+) contacts are provided by residues threonine 60–asparagine 61 and threonine 195–aspartate 198. The helical transmembrane segment at alanine 517–leucine 537 threads the bilayer.

The protein belongs to the FMO family. It depends on FAD as a cofactor. As to expression, liver.

It is found in the microsome membrane. Its subcellular location is the endoplasmic reticulum membrane. It carries out the reaction N,N-dimethylaniline + NADPH + O2 + H(+) = N,N-dimethylaniline N-oxide + NADP(+) + H2O. Functionally, this protein is involved in the oxidative metabolism of a variety of xenobiotics such as drugs and pesticides. The chain is Dimethylaniline monooxygenase [N-oxide-forming] 4 (FMO4) from Homo sapiens (Human).